Here is a 525-residue protein sequence, read N- to C-terminus: M-phase inducer phosphatase 1 (525 aa).

The short motif at 73–83 is the Phosphodegron element; sequence MGSSESTDSGF. Serine 75 carries the post-translational modification Phosphoserine; by CHEK1. Serine 78, serine 81, and serine 87 each carry phosphoserine; by NEK11. Serine 106 is modified (phosphoserine). Serine 123 carries the post-translational modification Phosphoserine; by CHEK1 and CHEK2. The KEN box signature appears at 140–142; it reads KEN. Serine 177 is modified (phosphoserine; by CHEK1). Disordered stretches follow at residues 179–204 and 262–308; these read PARM…PQSP and SASC…PEKP. Residues serine 279 and serine 293 each carry the phosphoserine; by CHEK1 and CHEK2 modification. Residues 294–306 show a composition bias toward low complexity; the sequence is VAGASPEEAASPE. Serine 322 carries the phosphoserine modification. The region spanning 377 to 483 is the Rhodanese domain; that stretch reads LIKEFVIIDC…FFLKCQSHCE (107 aa). Cysteine 432 is an active-site residue. Threonine 508 carries the post-translational modification Phosphothreonine; by CHEK1. A phosphoserine; by PLK3 mark is found at serine 514 and serine 520.

It belongs to the MPI phosphatase family. Interacts with CCNB1/cyclin B1. Interacts with YWHAE/14-3-3 epsilon when phosphorylated. Interacts with CUL1 specifically when CUL1 is neddylated and active. Interacts with BTRC/BTRCP1 and FBXW11/BTRCP2. Interactions with CUL1, BTRC and FBXW11 are enhanced upon DNA damage. Interacts with HSP90AB1; prevents heat shock-mediated CDC25A degradation and contributes to cell cycle progression. Post-translationally, phosphorylated by CHEK1 on Ser-75, Ser-123, Ser-177, Ser-279, Ser-293 and Thr-508 during checkpoint mediated cell cycle arrest. Also phosphorylated by CHEK2 on Ser-123, Ser-279, and Ser-293 during checkpoint mediated cell cycle arrest. Phosphorylation on Ser-177 and Thr-508 creates binding sites for YWHAE/14-3-3 epsilon which inhibits CDC25A. Phosphorylation on Ser-75, Ser-123, Ser-177, Ser-279 and Ser-293 may also promote ubiquitin-dependent proteolysis of CDC25A by the SCF complex. Phosphorylation of CDC25A at Ser-75 by CHEK1 primes it for subsequent phosphorylation at Ser-78, Ser-81 and Ser-87 by NEK11. Phosphorylation by NEK11 is required for BTRC-mediated polyubiquitination and degradation. Phosphorylation by PIM1 leads to an increase in phosphatase activity. Phosphorylated by PLK3 following DNA damage, leading to promote its ubiquitination and degradation. In terms of processing, ubiquitinated by the anaphase promoting complex/cyclosome (APC/C) ubiquitin ligase complex that contains FZR1/CDH1 during G1 phase leading to its degradation by the proteasome. Ubiquitinated by a SCF complex containing BTRC and FBXW11 during S phase leading to its degradation by the proteasome. Deubiquitination by USP17L2/DUB3 leads to its stabilization.

It carries out the reaction O-phospho-L-tyrosyl-[protein] + H2O = L-tyrosyl-[protein] + phosphate. Its activity is regulated as follows. Stimulated by B-type cyclins. Stimulated by PIM1-mediated phosphorylation. Tyrosine protein phosphatase which functions as a dosage-dependent inducer of mitotic progression. Directly dephosphorylates CDK1 and stimulates its kinase activity. Also dephosphorylates CDK2 in complex with cyclin-E, in vitro. The polypeptide is M-phase inducer phosphatase 1 (CDC25A) (Bos taurus (Bovine)).